The following is a 115-amino-acid chain: Xenovulene A biosynthesis cluster protein asL2 (115 aa).

Part of the gene cluster that mediates the biosynthesis of xenovulene A, an unusual meroterpenoid that has potent inhibitory effects on the human gamma-aminobutyrate A (GABAA) benzodiazepine receptor. The first step of xenovulene A biosynthesis is the biosynthesis of 3-methylorcinaldehyde performed by the non-reducing polyketide synthase aspks1. The salicylate hydroxylase asL1 then catalyzes the oxidative dearomatization of 3-methylorcinaldehyde to yield a dearomatized hydroxycyclohexadione. The 2-oxoglutarate-dependent dioxygenase asL3 further catalyzes the oxidative ring expansion to provide the first tropolone metabolite. The cytochrome P450 monooxygenase asR2 allows the synthesis of tropolone hemiacetal. In parallel, a previously unrecognised class of terpene cyclase, asR6, produces alpha-humulene from farnesylpyrophosphate (FPP). The putative Diels-Alderase asR5 probably catalyzes the formation of the tropolone-humulene skeleton by linking humulene and the polyketide moiety. Oxidative-ring contractions catalyzed by asL4 and asL6 then processively remove carbon atoms from the polyketide to yield xenovulene A. The chain is Xenovulene A biosynthesis cluster protein asL2 from Sarocladium schorii (Acremonium strictum (strain IMI 501407)).